Consider the following 720-residue polypeptide: Aminopeptidase RNPEPL1 (720 aa).

A substrate-binding site is contributed by 321–325; sequence VAMEN. Histidine 348 contributes to the Zn(2+) binding site. The active-site Proton acceptor is glutamate 349. Residues histidine 352 and glutamate 371 each coordinate Zn(2+). Positions 671-708 are disordered; sequence GLGPSAEPSTEPSTDLGGAEADTNPDSPALLLGDEAPS.

Belongs to the peptidase M1 family. Zn(2+) serves as cofactor.

The catalysed reaction is Release of N-terminal amino acids, preferentially methionine, from peptides and arylamides.. Broad specificity aminopeptidase which preferentially hydrolyzes an N-terminal methionine, citrulline or glutamine. This is Aminopeptidase RNPEPL1 from Mus musculus (Mouse).